The chain runs to 143 residues: HTH-type transcriptional regulator BudR (143 aa).

Residues 1–58 enclose the HTH lysR-type domain; the sequence is MELRYLRYFVAVARERHFTRAAKALGISQPPLSQQIKRLEEEVGTPLFRRLTRGVELT. A DNA-binding region (H-T-H motif) is located at residues 18–37; it reads FTRAAKALGISQPPLSQQIK.

This sequence belongs to the LysR transcriptional regulatory family.

Functionally, regulator of the budABC operon for 2,3-butanediol synthesis. The chain is HTH-type transcriptional regulator BudR (budR) from Klebsiella aerogenes (Enterobacter aerogenes).